Consider the following 164-residue polypeptide: Protein PPLZ02 (164 aa).

Positions R7–P64 form a DNA-binding region, AP2/ERF.

Its subcellular location is the nucleus. Its function is as follows. Essential for all lupin cells independent of the respective tissue. The polypeptide is Protein PPLZ02 (PPLZ02) (Lupinus polyphyllus (Large-leaved lupine)).